We begin with the raw amino-acid sequence, 173 residues long: Monothiol glutaredoxin-S14, chloroplastic (173 aa).

The N-terminal 63 residues, 1 to 63 (MALRSVKTPT…KLKPTKFRCS (63 aa)), are a transit peptide targeting the chloroplast. A Glutaredoxin domain is found at 72 to 173 (KDTLEKLVNS…QEEVEKAMCS (102 aa)). Lysine 89 contacts glutathione. [2Fe-2S] cluster is bound by residues cysteine 97 and phenylalanine 99. Cysteine 97 bears the S-glutathionyl cysteine mark. The required for CAX1 activation stretch occupies residues 97–100 (CGFS). Positions 126 and 130 each coordinate glutathione. A required for CAX1 activation region spans residues 133–137 (SNWPT). Glutathione contacts are provided by residues phenylalanine 138 and 151-152 (CD).

Belongs to the glutaredoxin family. CGFS subfamily. [2Fe-2S]-bridged holo-homodimer. Interacts with N-terminal part of CAX1 in yeast. Interacts in vitro with SUFE1, BOLA1, BOLA2 and BOLA4. Interacts in vivo only with SUFE1, BOLA1 and BOLA4. Interacts with SBP1. Highly expressed in leaves, at intermediate levels in stems and at lower levels in roots and flowers.

Its subcellular location is the plastid. The protein resides in the chloroplast. May only reduce GSH-thiol disulfides, but not protein disulfides (Potential). Probably involved in the regulation of the redox state of the BOLA proteins (Potential). May act as Fe-S cluster donors to Fe-S cluster-requiring proteins. May protect cells against protein oxidative damage. May regulate CAX cation transporters. The GRXS14-BOLA1 heterodimer binds a labile, oxygen sensitive Fe-S cluster. The protein is Monothiol glutaredoxin-S14, chloroplastic of Arabidopsis thaliana (Mouse-ear cress).